The chain runs to 595 residues: Sulfite reductase [NADPH] flavoprotein alpha-component (595 aa).

One can recognise a Flavodoxin-like domain in the interval 59–197 (ITVLSASQTG…KADIWRREIV (139 aa)). FMN contacts are provided by residues 65-70 (SQTGNA), 112-115 (STQG), and 148-157 (LGDSSYTYFA). Residues 230–444 (EEPFTAHLVV…IEHNDNFRLP (215 aa)) enclose the FAD-binding FR-type domain. Residues threonine 318, phenylalanine 352, 382-385 (RLYS), 400-402 (TVS), tyrosine 406, and 415-418 (GGAS) contribute to the FAD site. NADP(+) contacts are provided by residues 515-516 (SQ), 521-525 (KIYVQ), and aspartate 557. Tyrosine 595 is an FAD binding site.

Belongs to the NADPH-dependent sulphite reductase flavoprotein subunit CysJ family. This sequence in the N-terminal section; belongs to the flavodoxin family. It in the C-terminal section; belongs to the flavoprotein pyridine nucleotide cytochrome reductase family. In terms of assembly, alpha(8)-beta(8). The alpha component is a flavoprotein, the beta component is a hemoprotein. The cofactor is FAD. It depends on FMN as a cofactor.

The enzyme catalyses hydrogen sulfide + 3 NADP(+) + 3 H2O = sulfite + 3 NADPH + 4 H(+). It participates in sulfur metabolism; hydrogen sulfide biosynthesis; hydrogen sulfide from sulfite (NADPH route): step 1/1. Component of the sulfite reductase complex that catalyzes the 6-electron reduction of sulfite to sulfide. This is one of several activities required for the biosynthesis of L-cysteine from sulfate. The flavoprotein component catalyzes the electron flow from NADPH -&gt; FAD -&gt; FMN to the hemoprotein component. The sequence is that of Sulfite reductase [NADPH] flavoprotein alpha-component from Baumannia cicadellinicola subsp. Homalodisca coagulata.